Reading from the N-terminus, the 740-residue chain is MGTGWRRAFCTTAPRNSDAAAPDLDKQRTGYNLTPSPSPRSCVKLAFLSGGSNPSTPRSTSSPSLRCRTADAQTPTAEQTSTPRSATKSPRLSLAAISNPSSPRSPLKLSLFRNSFKFRSTCGICLNSVKTGQGTAKYTAECSHAFHFPCIADYVRKQGKLVCPVCNSIWKDASLLVPHKNATESPLDDSVSVIQEKRVVVTSSPRAKPRPKQSDYSRFYDDDEPLLSPRFVTIPEADENCGGEEEDDVPQFKGFVVDPNPSFAVKTNEIPVNGRDFGNVQVSLLPEAAVVSVGCGYETRAVALRVKAPPPLTARGGVGRRLLDPSQRAPVDLVVVVDVGGTMNGAKLQMVKRAMRLVISSLGSADRLSIVAVVMTVPKRLLPLKRMTEHGKRSAGAVVDGLLCGQGSNTSEALKKASRVLEDRRERNPVASIVLLTDGQGQLSKVHTNQRSTITNVGSTRFAHIEIPVTEHGFGESGGCSNAPAEEAFAKCIGGLLSVVVQDLRIQIRVGSGSGPCEISAIYLCNGRPTLVSSGSGSVRLGDLYAGEERELLVELRVPSTATRAYQILSVRGLFKDPSTQEVVYGRDQSLRVPQAVRSSSSPRIERLRSLFIATRAVAESRRLVEYGECTSAYHLLTSARALLGQSGTVEAAEYIKVVEAELVEVQWRGQQLMEYQSQHQQQHNQRRRGSERETTTTMTLMDENGEPLTPASAWRAAEKLAKLAMMKKSDLHGFENARF.

A disordered region spans residues 14 to 105 (PRNSDAAAPD…AISNPSSPRS (92 aa)). The span at 49–67 (SGGSNPSTPRSTSSPSLRC) shows a compositional bias: low complexity. Polar residues predominate over residues 71 to 90 (DAQTPTAEQTSTPRSATKSP). Residues 122 to 167 (CGICLNSVKTGQGTAKYTAECSHAFHFPCIADYVRKQGKLVCPVCN) form an RING-type; atypical zinc finger. Residues 332–476 (DLVVVVDVGG…IPVTEHGFGE (145 aa)) form the VWFA domain. Residues 677-709 (QSQHQQQHNQRRRGSERETTTTMTLMDENGEPL) form a disordered region.

As to quaternary structure, interacts with SINAT1, SINAT2, SINAT3, SINAT4, SINAT5, TOR1/SPR2 and FIP2. In terms of tissue distribution, expressed in root tips and leaf primordia.

It catalyses the reaction S-ubiquitinyl-[E2 ubiquitin-conjugating enzyme]-L-cysteine + [acceptor protein]-L-lysine = [E2 ubiquitin-conjugating enzyme]-L-cysteine + N(6)-ubiquitinyl-[acceptor protein]-L-lysine.. In terms of biological role, E3 ubiquitin-protein ligase involved in the regulation of root growth. Acts as a positive regulator of root gravitropism. Possesses E3 protein ligase activity in vitro. The polypeptide is E3 ubiquitin-protein ligase WAV3 (Arabidopsis thaliana (Mouse-ear cress)).